The chain runs to 275 residues: Formamidopyrimidine-DNA glycosylase (275 aa).

Residue Pro-2 is the Schiff-base intermediate with DNA of the active site. The Proton donor role is filled by Glu-3. The active-site Proton donor; for beta-elimination activity is the Lys-59. His-94 and Arg-113 together coordinate DNA. Residues 241 to 275 form an FPG-type zinc finger; the sequence is LVHTHAKEPCQICGTIIQKTKVNGRGTYYCPNCQN. Arg-265 serves as the catalytic Proton donor; for delta-elimination activity.

This sequence belongs to the FPG family. As to quaternary structure, monomer. It depends on Zn(2+) as a cofactor.

It carries out the reaction Hydrolysis of DNA containing ring-opened 7-methylguanine residues, releasing 2,6-diamino-4-hydroxy-5-(N-methyl)formamidopyrimidine.. It catalyses the reaction 2'-deoxyribonucleotide-(2'-deoxyribose 5'-phosphate)-2'-deoxyribonucleotide-DNA = a 3'-end 2'-deoxyribonucleotide-(2,3-dehydro-2,3-deoxyribose 5'-phosphate)-DNA + a 5'-end 5'-phospho-2'-deoxyribonucleoside-DNA + H(+). Its function is as follows. Involved in base excision repair of DNA damaged by oxidation or by mutagenic agents. Acts as a DNA glycosylase that recognizes and removes damaged bases. Has a preference for oxidized purines, such as 7,8-dihydro-8-oxoguanine (8-oxoG). Has AP (apurinic/apyrimidinic) lyase activity and introduces nicks in the DNA strand. Cleaves the DNA backbone by beta-delta elimination to generate a single-strand break at the site of the removed base with both 3'- and 5'-phosphates. In Ureaplasma parvum serovar 3 (strain ATCC 700970), this protein is Formamidopyrimidine-DNA glycosylase.